We begin with the raw amino-acid sequence, 387 residues long: Methyltransferase phomM' (387 aa).

The tract at residues Pro-98–Leu-223 is methyltransferase domain.

It belongs to the class I-like SAM-binding methyltransferase superfamily. Erg6/SMT family.

It functions in the pathway mycotoxin biosynthesis. Its function is as follows. Methyltransferase; part of the gene cluster that mediates the biosynthesis of the phomopsins, a group of hexapeptide mycotoxins which infects lupins and causes lupinosis disease in livestock. Within the pathway, phomM' acts as an S-adenosylmethionine-dependent alpha-N-methyltransferase that catalyzes two successive N-methylation reactions, converting N-desmethyl-phomopsin A to phomopsin A and phomopsin A further to an N,N-dimethylated congener called phomopsin E. The pathway starts with the processing of the precursor phomA' by several endopeptidases including kexin proteases as well as the cluster-specific S41 family peptidase phomP1 and the oligopeptidase phomG' to produce 10 identical copies of the hexapeptide Tyr-Val-Ile-Pro-Ile-Asp. After being excised from the precursor peptide, the core peptides are cyclized and modified post-translationally by enzymes encoded within the gene cluster. The timing and order of proteolysis of the phomA' precursor and PTMs are still unknown. Two tyrosinase-like enzymes, phomQ1' and phomQ2, catalyze the chlorination and hydroxylation of Tyr, respectively. PhomYb, is proposed to be involved in the construction of the macrocyclic structure. The other 4 ustYa family proteins may be involved in PTMs that generate the unique structure of phomopsin A. PhomYa' is required for the hydroxylation of C-beta of Tyr. PhomYc', phomYd', and phomYe are responsible for the biosynthesis of 2,3-dehydroisoleucine (dIle), 2,3-dehydroaspartic acid (dAsp), and 3,4-dehydroproline (dPro), respectively. While dIle formation by phomYc' is indispensable for the installation of dAsp by phomYd', the order of the other PTMs have not been elucidated yet. Most of the biosynthetic enzymes likely have broad substrate specificity, and thus, there might be a metabolic grid from a precursor to phomopsin A. The enzyme(s) responsible for the biosynthesis of 3,4-dehydrovaline (dVal) have also not been identified yet. Finally, phomM' acts as an S-adenosylmethionine-dependent alpha-N-methyltransferase that catalyzes two successive N-methylation reactions, converting N-desmethyl-phomopsin A to phomopsin A and phomopsin A further to an N,N-dimethylated congener called phomopsin E. In Diaporthe leptostromiformis (Lupinosis disease fungus), this protein is Methyltransferase phomM'.